The chain runs to 227 residues: Cytidylate kinase (227 aa).

12–20 provides a ligand contact to ATP; sequence GPSGAGKGT.

This sequence belongs to the cytidylate kinase family. Type 1 subfamily.

Its subcellular location is the cytoplasm. The enzyme catalyses CMP + ATP = CDP + ADP. It carries out the reaction dCMP + ATP = dCDP + ADP. This Shigella boydii serotype 18 (strain CDC 3083-94 / BS512) protein is Cytidylate kinase.